The following is a 293-amino-acid chain: Formamidopyrimidine-DNA glycosylase (293 aa).

The active-site Schiff-base intermediate with DNA is the Pro2. Residue Glu3 is the Proton donor of the active site. Lys58 (proton donor; for beta-elimination activity) is an active-site residue. DNA contacts are provided by His104, Arg127, and Arg170. An FPG-type zinc finger spans residues 257 to 293 (SVYGREGKPCRNPACGGTVERVVQSGRSTFFCASCQT). Arg283 serves as the catalytic Proton donor; for delta-elimination activity.

It belongs to the FPG family. As to quaternary structure, monomer. The cofactor is Zn(2+).

It carries out the reaction Hydrolysis of DNA containing ring-opened 7-methylguanine residues, releasing 2,6-diamino-4-hydroxy-5-(N-methyl)formamidopyrimidine.. It catalyses the reaction 2'-deoxyribonucleotide-(2'-deoxyribose 5'-phosphate)-2'-deoxyribonucleotide-DNA = a 3'-end 2'-deoxyribonucleotide-(2,3-dehydro-2,3-deoxyribose 5'-phosphate)-DNA + a 5'-end 5'-phospho-2'-deoxyribonucleoside-DNA + H(+). In terms of biological role, involved in base excision repair of DNA damaged by oxidation or by mutagenic agents. Acts as a DNA glycosylase that recognizes and removes damaged bases. Has a preference for oxidized purines, such as 7,8-dihydro-8-oxoguanine (8-oxoG). Has AP (apurinic/apyrimidinic) lyase activity and introduces nicks in the DNA strand. Cleaves the DNA backbone by beta-delta elimination to generate a single-strand break at the site of the removed base with both 3'- and 5'-phosphates. The polypeptide is Formamidopyrimidine-DNA glycosylase (Brucella melitensis biotype 1 (strain ATCC 23456 / CCUG 17765 / NCTC 10094 / 16M)).